We begin with the raw amino-acid sequence, 238 residues long: ATP synthase subunit a (238 aa).

5 consecutive transmembrane segments (helical) span residues 18-38, 76-96, 117-137, 195-215, and 216-236; these read MSTV…TFIG, FIVL…LGLP, VLTL…GIKI, LIGM…GLFI, and GAIQ…HKVE.

The protein belongs to the ATPase A chain family. F-type ATPases have 2 components, CF(1) - the catalytic core - and CF(0) - the membrane proton channel. CF(1) has five subunits: alpha(3), beta(3), gamma(1), delta(1), epsilon(1). CF(0) has three main subunits: a(1), b(2) and c(9-12). The alpha and beta chains form an alternating ring which encloses part of the gamma chain. CF(1) is attached to CF(0) by a central stalk formed by the gamma and epsilon chains, while a peripheral stalk is formed by the delta and b chains.

It is found in the cell membrane. Key component of the proton channel; it plays a direct role in the translocation of protons across the membrane. The sequence is that of ATP synthase subunit a from Alkalihalophilus pseudofirmus (strain ATCC BAA-2126 / JCM 17055 / OF4) (Bacillus pseudofirmus).